We begin with the raw amino-acid sequence, 374 residues long: UPF0496 protein At3g28270 (374 aa).

The stretch at 171–210 (KVLTTQFERIKKQQESLLEEVSETRKKIQDEISNLEKKTL) forms a coiled coil. Transmembrane regions (helical) follow at residues 214–234 (VVFG…IATG) and 235–255 (VGAA…GWAG). Positions 256–321 (VYTTLDKKKD…MLKLVDNAID (66 aa)) form a coiled coil.

This sequence belongs to the UPF0496 family.

The protein resides in the membrane. In Arabidopsis thaliana (Mouse-ear cress), this protein is UPF0496 protein At3g28270.